Reading from the N-terminus, the 65-residue chain is Large ribosomal subunit protein bL32 (65 aa).

Residues 1–45 (MAVQQNKKTPSKRGMRRAHDVLKKPTFSVDFSSGETHRRHHVTPD) are disordered.

Belongs to the bacterial ribosomal protein bL32 family.

This chain is Large ribosomal subunit protein bL32, found in Nitrosococcus oceani (strain ATCC 19707 / BCRC 17464 / JCM 30415 / NCIMB 11848 / C-107).